The following is a 91-amino-acid chain: Small ribosomal subunit protein bS18 (91 aa).

The segment at 1–21 is disordered; it reads MSDERTPQRSSGPRKKRPFQR. Residues 12–21 are compositionally biased toward basic residues; the sequence is GPRKKRPFQR.

Belongs to the bacterial ribosomal protein bS18 family. In terms of assembly, part of the 30S ribosomal subunit. Forms a tight heterodimer with protein bS6.

Binds as a heterodimer with protein bS6 to the central domain of the 16S rRNA, where it helps stabilize the platform of the 30S subunit. In Geotalea uraniireducens (strain Rf4) (Geobacter uraniireducens), this protein is Small ribosomal subunit protein bS18.